The sequence spans 549 residues: Chaperonin GroEL (549 aa).

Residues 30 to 33 (TLGP), Lys-51, 87 to 91 (DGTTT), Gly-415, 479 to 481 (NAA), and Asp-495 each bind ATP.

The protein belongs to the chaperonin (HSP60) family. As to quaternary structure, forms a cylinder of 14 subunits composed of two heptameric rings stacked back-to-back. Interacts with the co-chaperonin GroES.

The protein resides in the cytoplasm. The catalysed reaction is ATP + H2O + a folded polypeptide = ADP + phosphate + an unfolded polypeptide.. Together with its co-chaperonin GroES, plays an essential role in assisting protein folding. The GroEL-GroES system forms a nano-cage that allows encapsulation of the non-native substrate proteins and provides a physical environment optimized to promote and accelerate protein folding. The polypeptide is Chaperonin GroEL (Stenotrophomonas maltophilia (strain K279a)).